Here is a 293-residue protein sequence, read N- to C-terminus: 4-hydroxy-tetrahydrodipicolinate synthase (293 aa).

Threonine 46 provides a ligand contact to pyruvate. The active-site Proton donor/acceptor is tyrosine 133. Residue lysine 161 is the Schiff-base intermediate with substrate of the active site. Valine 202 contacts pyruvate.

This sequence belongs to the DapA family. In terms of assembly, homotetramer; dimer of dimers.

The protein localises to the cytoplasm. The catalysed reaction is L-aspartate 4-semialdehyde + pyruvate = (2S,4S)-4-hydroxy-2,3,4,5-tetrahydrodipicolinate + H2O + H(+). It participates in amino-acid biosynthesis; L-lysine biosynthesis via DAP pathway; (S)-tetrahydrodipicolinate from L-aspartate: step 3/4. In terms of biological role, catalyzes the condensation of (S)-aspartate-beta-semialdehyde [(S)-ASA] and pyruvate to 4-hydroxy-tetrahydrodipicolinate (HTPA). The sequence is that of 4-hydroxy-tetrahydrodipicolinate synthase from Wolbachia pipientis wMel.